A 458-amino-acid chain; its full sequence is tRNA modification GTPase MnmE (458 aa).

Residues Arg22, Glu84, and Arg123 each coordinate (6S)-5-formyl-5,6,7,8-tetrahydrofolate. A TrmE-type G domain is found at 220–379 (GIATAIIGRP…LEKAIADLFF (160 aa)). Asn230 is a K(+) binding site. GTP is bound by residues 230 to 235 (NVGKSS), 249 to 255 (TDIAGTT), and 274 to 277 (DTAG). Residue Ser234 coordinates Mg(2+). K(+) is bound by residues Thr249, Ile251, and Thr254. Mg(2+) is bound at residue Thr255. Lys458 lines the (6S)-5-formyl-5,6,7,8-tetrahydrofolate pocket.

It belongs to the TRAFAC class TrmE-Era-EngA-EngB-Septin-like GTPase superfamily. TrmE GTPase family. Homodimer. Heterotetramer of two MnmE and two MnmG subunits. The cofactor is K(+).

It localises to the cytoplasm. In terms of biological role, exhibits a very high intrinsic GTPase hydrolysis rate. Involved in the addition of a carboxymethylaminomethyl (cmnm) group at the wobble position (U34) of certain tRNAs, forming tRNA-cmnm(5)s(2)U34. The sequence is that of tRNA modification GTPase MnmE from Bacillus cytotoxicus (strain DSM 22905 / CIP 110041 / 391-98 / NVH 391-98).